The chain runs to 347 residues: NADH-ubiquinone oxidoreductase chain 2 (347 aa).

11 helical membrane passes run 3–23, 25–45, 59–79, 96–116, 122–142, 148–168, 178–198, 202–222, 240–260, 276–296, and 326–346; these read PLILLLITLTVILGTLIVMMS, HWLMIWMGFEMNMLAVIPLLM, YFLTQATASMLLMLAIIINLM, IIMTLALMMKLGLAPFHFWVP, ISLTSGLILLTWQKLAPLSIL, VINPDLLLMASMLSIAIGGWG, ILAYSSIAHMGWMMSVLAFNP, LLNLFMYILMTSTTFMLFMVA, ITTSILIMMLSLGGLPPLAGF, IILATLMAITALLNLFFYIRL, and LPPLIIMSTLTLPLAPAMILL.

It belongs to the complex I subunit 2 family. In terms of assembly, core subunit of respiratory chain NADH dehydrogenase (Complex I) which is composed of 45 different subunits. Interacts with TMEM242.

The protein localises to the mitochondrion inner membrane. It catalyses the reaction a ubiquinone + NADH + 5 H(+)(in) = a ubiquinol + NAD(+) + 4 H(+)(out). Functionally, core subunit of the mitochondrial membrane respiratory chain NADH dehydrogenase (Complex I) which catalyzes electron transfer from NADH through the respiratory chain, using ubiquinone as an electron acceptor. Essential for the catalytic activity and assembly of complex I. The protein is NADH-ubiquinone oxidoreductase chain 2 of Peropteryx kappleri (Greater dog-like bat).